Consider the following 547-residue polypeptide: Glucose-6-phosphate isomerase 1 (547 aa).

The active-site Proton donor is Glu-353. Active-site residues include His-384 and Lys-512.

Belongs to the GPI family.

It localises to the cytoplasm. It carries out the reaction alpha-D-glucose 6-phosphate = beta-D-fructose 6-phosphate. Its pathway is carbohydrate biosynthesis; gluconeogenesis. It functions in the pathway carbohydrate degradation; glycolysis; D-glyceraldehyde 3-phosphate and glycerone phosphate from D-glucose: step 2/4. Its function is as follows. Catalyzes the reversible isomerization of glucose-6-phosphate to fructose-6-phosphate. The polypeptide is Glucose-6-phosphate isomerase 1 (Chromobacterium violaceum (strain ATCC 12472 / DSM 30191 / JCM 1249 / CCUG 213 / NBRC 12614 / NCIMB 9131 / NCTC 9757 / MK)).